We begin with the raw amino-acid sequence, 268 residues long: Small ribosomal subunit protein uS3 (268 aa).

The region spanning 38–106 (IRKLLATGME…QVQLNILEVK (69 aa)) is the KH type-2 domain. Residues 217-268 (NTAAPAGDRPRRERPSRPRRSGATGTTATSTEAGRAATATADAPATEQNQEG) are disordered. The segment covering 237–268 (SGATGTTATSTEAGRAATATADAPATEQNQEG) has biased composition (low complexity).

The protein belongs to the universal ribosomal protein uS3 family. In terms of assembly, part of the 30S ribosomal subunit. Forms a tight complex with proteins S10 and S14.

Binds the lower part of the 30S subunit head. Binds mRNA in the 70S ribosome, positioning it for translation. This is Small ribosomal subunit protein uS3 from Rhodococcus erythropolis (strain PR4 / NBRC 100887).